The sequence spans 160 residues: Transcription antitermination protein NusB (160 aa).

This sequence belongs to the NusB family.

Functionally, involved in transcription antitermination. Required for transcription of ribosomal RNA (rRNA) genes. Binds specifically to the boxA antiterminator sequence of the ribosomal RNA (rrn) operons. The protein is Transcription antitermination protein NusB of Sinorhizobium medicae (strain WSM419) (Ensifer medicae).